A 2130-amino-acid polypeptide reads, in one-letter code: DNA polymerase zeta catalytic subunit (2130 aa).

Disordered regions lie at residues Pro-528–Leu-635, Gly-734–Ala-891, Phe-927–Pro-954, and Gln-1189–Gln-1243. The segment covering Thr-553–Ile-574 has biased composition (low complexity). The span at Pro-620–Gly-629 shows a compositional bias: polar residues. Residues Cys-735–Pro-753 show a composition bias toward basic and acidic residues. Composition is skewed to polar residues over residues Ser-771–Asp-786, Leu-794–Gly-808, and Asp-818–Glu-835. Over residues Leu-840–Arg-860 the composition is skewed to basic and acidic residues. Residues Thr-938–Pro-954 are compositionally biased toward polar residues. Positions Pro-1228–Gln-1243 are enriched in low complexity. Residues Cys-2041, Cys-2045, Cys-2054, and Cys-2057 each contribute to the Zn(2+) site. 4 residues coordinate [4Fe-4S] cluster: Cys-2086, Cys-2089, Cys-2098, and Cys-2103. Positions Cys-2086 to Cys-2103 match the CysB motif motif.

It belongs to the DNA polymerase type-B family. In terms of assembly, catalytic subunit of the zeta DNA polymerase complex, which consists of PolZ1/DNApol-zeta and the accessory component PolZ2/Rev7. Interacts with the apurinic/apyrimidinic (AP) endonuclease Rrp1; the interaction is likely indirect and mediated via PolZ2. The cofactor is [4Fe-4S] cluster.

It carries out the reaction DNA(n) + a 2'-deoxyribonucleoside 5'-triphosphate = DNA(n+1) + diphosphate. With respect to regulation, inhibited by tetracyclic diterpene antibiotic aphidicolin. In terms of biological role, as the catalytic subunit of the DNA polymerase zeta complex, plays a crucial role in translesion DNA synthesis (TLS) and various DNA repair mechanisms. Lacks an intrinsic 3'-5' exonuclease activity and thus has no proofreading function. During homologous recombination (HR) repair, has a overlapping role with the error-prone translesion polymerase eta to initiate repair synthesis which is completed by end joining or another polymerase that can bind and reinitiate synthesis. May participate in the Rrp1-dependent base excision repair (BER) pathway responsible for repair of DNA lesions that gives rise to apurinic/apyrimidinic (AP) sites. Unlike mammalian orthologs, it is not an error-prone polymerase. This chain is DNA polymerase zeta catalytic subunit, found in Drosophila melanogaster (Fruit fly).